The primary structure comprises 119 residues: NADH-quinone oxidoreductase subunit A (119 aa).

Helical transmembrane passes span V9–L29, L63–V83, and I88–V108.

Belongs to the complex I subunit 3 family. In terms of assembly, NDH-1 is composed of 14 different subunits. Subunits NuoA, H, J, K, L, M, N constitute the membrane sector of the complex.

It is found in the cell inner membrane. The enzyme catalyses a quinone + NADH + 5 H(+)(in) = a quinol + NAD(+) + 4 H(+)(out). Functionally, NDH-1 shuttles electrons from NADH, via FMN and iron-sulfur (Fe-S) centers, to quinones in the respiratory chain. The immediate electron acceptor for the enzyme in this species is believed to be ubiquinone. Couples the redox reaction to proton translocation (for every two electrons transferred, four hydrogen ions are translocated across the cytoplasmic membrane), and thus conserves the redox energy in a proton gradient. The sequence is that of NADH-quinone oxidoreductase subunit A from Leptothrix cholodnii (strain ATCC 51168 / LMG 8142 / SP-6) (Leptothrix discophora (strain SP-6)).